Here is a 306-residue protein sequence, read N- to C-terminus: Diacylglycerol kinase (306 aa).

The region spanning 1-132 is the DAGKc domain; sequence MRKRARIIYN…VDIGKMNSRY (132 aa). ATP is bound by residues 10 to 14, threonine 41, 67 to 73, and threonine 94; these read NPTSG and GDGTLNE. The Mg(2+) site is built by arginine 213, aspartate 216, and tyrosine 218. Glutamate 273 functions as the Proton acceptor in the catalytic mechanism.

The protein belongs to the diacylglycerol/lipid kinase family. In terms of assembly, homodimer. Mg(2+) serves as cofactor.

The enzyme catalyses a 1,2-diacyl-sn-glycerol + ATP = a 1,2-diacyl-sn-glycero-3-phosphate + ADP + H(+). Functionally, catalyzes the phosphorylation of diacylglycerol (DAG) into phosphatidic acid. Is a key enzyme involved in the production of lipoteichoic acid by reintroducing DAG formed from the breakdown of membrane phospholipids into the phosphatidylglycerol biosynthetic pathway. The polypeptide is Diacylglycerol kinase (dagK) (Staphylococcus carnosus (strain TM300)).